Reading from the N-terminus, the 201-residue chain is Imidazole glycerol phosphate synthase subunit HisH (201 aa).

The region spanning 1–201 (MIAIIDYGAG…LLKRYEEMIR (201 aa)) is the Glutamine amidotransferase type-1 domain. Residue cysteine 79 is the Nucleophile of the active site. Residues histidine 181 and glutamate 183 contribute to the active site.

As to quaternary structure, heterodimer of HisH and HisF.

The protein localises to the cytoplasm. It carries out the reaction 5-[(5-phospho-1-deoxy-D-ribulos-1-ylimino)methylamino]-1-(5-phospho-beta-D-ribosyl)imidazole-4-carboxamide + L-glutamine = D-erythro-1-(imidazol-4-yl)glycerol 3-phosphate + 5-amino-1-(5-phospho-beta-D-ribosyl)imidazole-4-carboxamide + L-glutamate + H(+). The enzyme catalyses L-glutamine + H2O = L-glutamate + NH4(+). Its pathway is amino-acid biosynthesis; L-histidine biosynthesis; L-histidine from 5-phospho-alpha-D-ribose 1-diphosphate: step 5/9. Its function is as follows. IGPS catalyzes the conversion of PRFAR and glutamine to IGP, AICAR and glutamate. The HisH subunit catalyzes the hydrolysis of glutamine to glutamate and ammonia as part of the synthesis of IGP and AICAR. The resulting ammonia molecule is channeled to the active site of HisF. This is Imidazole glycerol phosphate synthase subunit HisH from Oceanobacillus iheyensis (strain DSM 14371 / CIP 107618 / JCM 11309 / KCTC 3954 / HTE831).